The following is a 131-amino-acid chain: UPF0102 protein AZC_4471 (131 aa).

It belongs to the UPF0102 family.

The chain is UPF0102 protein AZC_4471 from Azorhizobium caulinodans (strain ATCC 43989 / DSM 5975 / JCM 20966 / LMG 6465 / NBRC 14845 / NCIMB 13405 / ORS 571).